We begin with the raw amino-acid sequence, 109 residues long: Probable glutaredoxin slr1562 (109 aa).

Residues 11-109 (LSGRQADGIK…PLLATPPNPA (99 aa)) enclose the Glutaredoxin domain. Cys-31 and Cys-34 are oxidised to a cystine.

The protein belongs to the glutaredoxin family.

Has a glutathione-disulfide oxidoreductase activity in the presence of NADPH and glutathione reductase. Reduces low molecular weight disulfides and proteins. This Synechocystis sp. (strain ATCC 27184 / PCC 6803 / Kazusa) protein is Probable glutaredoxin slr1562.